We begin with the raw amino-acid sequence, 611 residues long: DNA mismatch repair protein MutL (611 aa).

Belongs to the DNA mismatch repair MutL/HexB family.

In terms of biological role, this protein is involved in the repair of mismatches in DNA. It is required for dam-dependent methyl-directed DNA mismatch repair. May act as a 'molecular matchmaker', a protein that promotes the formation of a stable complex between two or more DNA-binding proteins in an ATP-dependent manner without itself being part of a final effector complex. The chain is DNA mismatch repair protein MutL from Bartonella bacilliformis (strain ATCC 35685 / KC583 / Herrer 020/F12,63).